The sequence spans 110 residues: UPF0060 membrane protein Pmen_1247 (110 aa).

The next 4 membrane-spanning stretches (helical) occupy residues 5 to 25 (LWFL…WMWL), 31 to 51 (AWWI…LTRV), 59 to 79 (AYAA…ALIE), and 84 to 104 (MLSD…ILFA).

The protein belongs to the UPF0060 family.

It is found in the cell inner membrane. The protein is UPF0060 membrane protein Pmen_1247 of Ectopseudomonas mendocina (strain ymp) (Pseudomonas mendocina).